A 342-amino-acid chain; its full sequence is Galactose mutarotase (342 aa).

A Phosphoserine modification is found at S14. Residues 81–82 and H107 contribute to the beta-D-galactose site; that span reads NR. Position 124 is a phosphoserine (S124). H176 functions as the Proton donor in the catalytic mechanism. Beta-D-galactose is bound by residues 176–178, D243, Q279, and E307; that span reads HSY. E307 functions as the Proton acceptor in the catalytic mechanism.

Belongs to the aldose epimerase family. As to quaternary structure, monomer.

The protein resides in the cytoplasm. The enzyme catalyses alpha-D-galactose = beta-D-galactose. It catalyses the reaction alpha-D-glucose = beta-D-glucose. Its pathway is carbohydrate metabolism; hexose metabolism. It participates in carbohydrate metabolism; galactose metabolism. Functionally, mutarotase that catalyzes the interconversion of beta-D-galactose and alpha-D-galactose during galactose metabolism. Beta-D-galactose is metabolized in the liver into glucose 1-phosphate, the primary metabolic fuel, by the action of four enzymes that constitute the Leloir pathway: GALM, GALK1 (galactokinase), GALT (galactose-1-phosphate uridylyltransferase) and GALE (UDP-galactose-4'-epimerase). Involved in the maintenance of the equilibrium between the beta- and alpha-anomers of galactose, therefore ensuring a sufficient supply of the alpha-anomer for GALK1. Also active on D-glucose although shows a preference for galactose over glucose. This chain is Galactose mutarotase (GALM), found in Sus scrofa (Pig).